We begin with the raw amino-acid sequence, 277 residues long: Coiled-coil domain-containing protein 117 (277 aa).

The disordered stretch occupies residues 1–69 (MAALGRPFSG…GRVSIHCRKK (69 aa)). Residues 26-37 (FAGRAFPPGAAG) show a composition bias toward low complexity. Arg47 carries the post-translational modification Omega-N-methylarginine. Ser52 bears the Phosphoserine mark. Over residues 58-69 (ARGRVSIHCRKK) the composition is skewed to basic residues. Positions 139-166 (QCEVARRRLQEIEDRIIDEDEEVESDRN) form a coiled coil. The segment at 212–277 (LPELLPEKPK…ATSTEEEMEL (66 aa)) is disordered.

In terms of assembly, interacts with CIAO2B; the interaction is direct. Interacts with MMS19; the interaction is indirect.

Its subcellular location is the cytoplasm. It is found in the cytoskeleton. The protein localises to the spindle. The protein resides in the nucleus. Its function is as follows. Facilitates DNA repair, cell cycle progression, and cell proliferation through its interaction with CIAO2B. The sequence is that of Coiled-coil domain-containing protein 117 from Mus musculus (Mouse).